Reading from the N-terminus, the 1167-residue chain is Integrin alpha-E (1167 aa).

The signal sequence occupies residues 1–19; sequence MKWLFHTLLCMASLKPQGA. At 20 to 1114 the chain is on the extracellular side; the sequence is FNLDVDWAWV…IFLKEEETRS (1095 aa). 2 FG-GAP repeats span residues 27–81 and 84–142; these read AWVT…PDEI and QPVE…LQAQ. N-linked (GlcNAc...) asparagine glycosylation is present at Asn-51. Cystine bridges form between Cys-72–Cys-83 and Cys-130–Cys-164. The tract at residues 149 to 192 is X-domain (extra domain); that stretch reads EGFLDPGAHVDSGDYCRSKGGSTGEEKKSARRRRTVEEEDEEED. A disordered region spans residues 163-191; it reads YCRSKGGSTGEEKKSARRRRTVEEEDEEE. A VWFA domain is found at 193-382; that stretch reads GTEIAIVLDG…SKLQQHIVHM (190 aa). Residues Asn-256, Asn-314, Asn-341, Asn-364, Asn-418, and Asn-437 are each glycosylated (N-linked (GlcNAc...) asparagine). Residues 383-435 form an FG-GAP 3 repeat; the sequence is EGTVGDALQYQLAQTGFSAQILDKGQVLLGTVGAFNWSGGALLYSTQNGRGCF. 4 FG-GAP repeats span residues 438–491, 492–552, 555–619, and 623–683; these read QTAK…REED, AFVR…DASF, AHTL…GLYD, and QQIR…FTPD. Positions 514, 516, 518, 522, 578, 580, 582, 586, 646, 648, 650, and 654 each coordinate Ca(2+). Residues Cys-698 and Cys-754 are joined by a disulfide bond. Residues Asn-718 and Asn-773 are each glycosylated (N-linked (GlcNAc...) asparagine). Residues Cys-814 and Cys-820 are joined by a disulfide bond. Residues Asn-829 and Asn-846 are each glycosylated (N-linked (GlcNAc...) asparagine). A disulfide bond links Cys-884 and Cys-898. Residues Asn-911, Asn-925, Asn-968, and Asn-1013 are each glycosylated (N-linked (GlcNAc...) asparagine). 2 disulfides stabilise this stretch: Cys-998–Cys-1023 and Cys-1031–Cys-1047. Asn-1055 and Asn-1086 each carry an N-linked (GlcNAc...) asparagine glycan. The helical transmembrane segment at 1115-1137 threads the bilayer; that stretch reads LPLIIGSSIGGLLVLVVIIAILF. Topologically, residues 1138–1167 are cytoplasmic; it reads KCGFFKRKYQQLNLESTRRAQLKADSLLQD. Positions 1140 to 1144 match the GFFKR motif motif; sequence GFFKR.

Belongs to the integrin alpha chain family. In terms of assembly, heterodimer of an alpha and a beta subunit. The alpha subunit is composed of a heavy and a light chains linked by a disulfide bond. Alpha-E associates with beta-7.

It is found in the membrane. Integrin alpha-E/beta-7 is a receptor for E-cadherin. It mediates adhesion of intra-epithelial T-lymphocytes to epithelial cell monolayers. Mice expressing a null mutation of the alpha-E subunit gene exhibit a marked reduction in the numbers of intraepithelial lymphocytes in the gut and in the development of gut-associated lymphoid aggregates, supporting a specific role for this integrin in mediating retention of lymphocytes in the intestinal wall. The sequence is that of Integrin alpha-E (Itgae) from Mus musculus (Mouse).